The following is a 396-amino-acid chain: MKNIVILGATGSIGQSTLSVIEHNPDQYQVFALVGGKNVELMATQCSQFKPKFAALVDEKAAKLLAEQLKALNLTTQVLTGEQAICELAAHPDANIVMAAIVGAAGLLPTLAAVKAGKQILLANKESLVTCGQIFIDEARKSGATLLPVDSEHNAIFQSLPLVAQQKIGFCPLAELGVSRIILTGSGGPFREKSLAEFDSITPEQAIAHPNWSMGKKISVDSATMMNKGLEYIEARWLFNASVEEMEIIIHPQSIIHSMVRYIDGSVIAQMGNPDMRTPIAHTMAYPNRIPSGVMPLDFGKLTELTFIEPDFKRYPNLKLAIEASAEGQYATTALNAANEIAVDAFLNRQIRFTEIERINSTVVENIAPLRVNDVADVLHIDQLAREIAKQAMLNV.

NADPH contacts are provided by Thr-10, Gly-11, Ser-12, Ile-13, Gly-36, Lys-37, Asn-38, and Asn-124. Lys-125 provides a ligand contact to 1-deoxy-D-xylulose 5-phosphate. Glu-126 contributes to the NADPH binding site. Asp-150 is a Mn(2+) binding site. Ser-151, Glu-152, Ser-186, and His-209 together coordinate 1-deoxy-D-xylulose 5-phosphate. Glu-152 contributes to the Mn(2+) binding site. Position 215 (Gly-215) interacts with NADPH. The 1-deoxy-D-xylulose 5-phosphate site is built by Ser-222, Asn-227, Lys-228, and Glu-231. Position 231 (Glu-231) interacts with Mn(2+).

This sequence belongs to the DXR family. The cofactor is Mg(2+). It depends on Mn(2+) as a cofactor.

The enzyme catalyses 2-C-methyl-D-erythritol 4-phosphate + NADP(+) = 1-deoxy-D-xylulose 5-phosphate + NADPH + H(+). It participates in isoprenoid biosynthesis; isopentenyl diphosphate biosynthesis via DXP pathway; isopentenyl diphosphate from 1-deoxy-D-xylulose 5-phosphate: step 1/6. Catalyzes the NADPH-dependent rearrangement and reduction of 1-deoxy-D-xylulose-5-phosphate (DXP) to 2-C-methyl-D-erythritol 4-phosphate (MEP). In Haemophilus ducreyi (strain 35000HP / ATCC 700724), this protein is 1-deoxy-D-xylulose 5-phosphate reductoisomerase.